A 262-amino-acid polypeptide reads, in one-letter code: Nodulation protein J (262 aa).

The ABC transmembrane type-2 domain occupies Ala-33–Arg-259. 6 helical membrane passes run Met-43 to Val-63, Ala-67 to Ile-87, Ala-119 to Leu-139, Ile-148 to Val-168, Tyr-177 to Phe-197, and Leu-236 to Leu-256.

The protein belongs to the ABC-2 integral membrane protein family. Lipooligosaccharide exporter (TC 3.A.1.102) subfamily. As to quaternary structure, the complex is composed of two ATP-binding proteins (NodI) and two transmembrane proteins (NodJ).

The protein localises to the cell inner membrane. Its function is as follows. Part of the ABC transporter complex NodIJ involved in the export of the nodulation factors (Nod factors), the bacterial signal molecules that induce symbiosis and subsequent nodulation induction. Nod factors are LCO (lipo-chitin oligosaccharide), a modified beta-1,4-linked N-acetylglucosamine oligosaccharide. This subunit encodes the transporter. The polypeptide is Nodulation protein J (nodJ) (Neorhizobium galegae (Rhizobium galegae)).